The chain runs to 399 residues: Bone morphogenetic protein 8A (399 aa).

An N-terminal signal peptide occupies residues 1-19; it reads MAMRPGPLWLLGLALCALG. The propeptide occupies 20-260; it reads GGHGPRPPHT…ASQSPVRAPR (241 aa). The N-linked (GlcNAc...) asparagine glycan is linked to Asn155. Residues 257-286 are disordered; that stretch reads RAPRAARPLKRRQPKKTNELPHPNKLPGIF. 3 disulfides stabilise this stretch: Cys298/Cys364, Cys327/Cys396, and Cys331/Cys398. Asn340 carries N-linked (GlcNAc...) asparagine glycosylation.

Belongs to the TGF-beta family. As to quaternary structure, homodimer; disulfide-linked. In terms of tissue distribution, expressed in testis. expressed in trophoblast cells of the labyrinthine region of the placenta and in the inner root sheath of hair follicles of early postnatal skin. Expressed predominantly in the neonatal mouse spermatogonia.

The protein localises to the secreted. Its function is as follows. Growth factor of the TGF-beta superfamily that plays important role in various biological processes, including spermatogenesis, osteogenesis, steroidogenesis as well as regulation of energy balance. Initiates the canonical BMP signaling cascade by associating with type I receptor BMPR1A and type II receptor BMPR2. Once all three components are bound together in a complex at the cell surface, BMPR2 phosphorylates and activates BMPR1A. In turn, BMPR1A propagates signal by phosphorylating SMAD1/5/8 that travel to the nucleus and act as activators and repressors of transcription of target genes. In addition, activates the SMAD2/3 pathway. The chain is Bone morphogenetic protein 8A (Bmp8a) from Mus musculus (Mouse).